The sequence spans 565 residues: DNA repair protein RAD7 (565 aa).

2 disordered regions span residues 1 to 22 and 41 to 68; these read MYRSRNRPKRGGENEVKGPNSA and WYQRQSKKQEDATDEKKGKAEDDSFTAE. A hydrophilic region spans residues 1–200; it reads MYRSRNRPKR…SKLVFNKLRD (200 aa). Positions 47–62 are enriched in basic and acidic residues; that stretch reads KKQEDATDEKKGKAED. 2 positions are modified to phosphoserine: serine 64 and serine 85. The segment at 105–137 is disordered; sequence ADSDEEEYETSHISDTPVSLSSANDRESLTKKR. Over residues 115 to 127 the composition is skewed to polar residues; the sequence is SHISDTPVSLSSA.

This sequence to S.pombe SpCC613.14. In terms of assembly, component of the global genome repair (GGR) complex composed of at least ABF1, RAD7 and RAD16. Interacts with ELC1.

In terms of biological role, component of the global genome repair (GGR) complex which promotes global genome nucleotide excision repair (GG-NER) which removes DNA damage from nontranscribing DNA. This protein is one of 10 proteins (RAD1, 2,3,4,7,10,14, 16,23 and MMS19) involved in excision repair of DNA damaged with UV light, bulky adducts, or cross-linking agents. The chain is DNA repair protein RAD7 (RAD7) from Saccharomyces cerevisiae (strain ATCC 204508 / S288c) (Baker's yeast).